A 763-amino-acid polypeptide reads, in one-letter code: MSELLSFALFLASVLIYAWKAGRNTWWFAATLTVLGLFVVLNITLFASDYFTGDGINDAVLYTLTNSLTGAGVSKYILPGIGIVLGLTAVFGALGWILRRRRHHPHHFGYSLLALLLALGSVDASPAFRQITELVKSQSRDGDPDFAAYYKEPSKTIPDPKLNLVYIYGESLERTYFDNEAFPDLTPELGALKNEGLDFSHTQQLPGTDYTIAGMVASQCGIPLFAPFEGNASASVSSFFPQNICLGDILKNSGYQNYFVQGANLRFAGKDVFLKSHGFDHLYGSEELKSVVADPHYRNDWGFYDDTVLDEAWKKFEELSRSGQRFSLFTLTVDTHHPDGFISRTCNRKKYDFDGKPNQSFSAVSCSQENIATFINKIKASPWFKDTVIVVSSDHLAMNNTAWKYLNKQDRNNLFFVIRGDKPQQETLAVKRNTMDNGATVLDILGGDNYLGLGRSSLSGQSMSEIFLNIKEKTLAWKPDIIRLWKFPKEMKEFTIDQQKNMIAFSGSHFRLPLLLRVSDKRVEPLPESEYSAPLRFQLADFAPRDNFVWVDRCYKMAQLWAPELALSTDWCVSQGQLGGQQIVQHVDKTTWQGKTAFKDTVIDMARYKGNVDTLKIVDNDIRYKADSFIFNVAGAPEEVKQFSGISRPESWGRWSNAQLGDEVKIEYKHPLPKKFDLVITAKAYGNNASRPIPVRVGNEEQTLVLGNEVTTTTLHFDNPTDADTLVIVPPEPVSTNEGNILGHSPRKLGIGMVEIKVVEREG.

The next 4 helical transmembrane spans lie at 1-21, 26-46, 77-97, and 108-128; these read MSEL…AWKA, WWFA…ITLF, ILPG…LGWI, and FGYS…SPAF.

Belongs to the OpgB family.

It is found in the cell inner membrane. It catalyses the reaction a phosphatidylglycerol + a membrane-derived-oligosaccharide D-glucose = a 1,2-diacyl-sn-glycerol + a membrane-derived-oligosaccharide 6-(glycerophospho)-D-glucose.. It participates in glycan metabolism; osmoregulated periplasmic glucan (OPG) biosynthesis. Functionally, transfers a phosphoglycerol residue from phosphatidylglycerol to the membrane-bound nascent glucan backbones. The polypeptide is Phosphoglycerol transferase I (Escherichia coli O45:K1 (strain S88 / ExPEC)).